The following is a 315-amino-acid chain: Neurogenic differentiation factor 4 (315 aa).

Positions 39-71 (ERGSIDGEEDDEEEEDGEKPKKRGPKKKKMTKA) are disordered. Residues 44–55 (DGEEDDEEEEDG) are compositionally biased toward acidic residues. A compositionally biased stretch (basic residues) spans 58 to 70 (PKKRGPKKKKMTK). The bHLH domain maps to 78–130 (VRRVKANARERSRMHGLNDALENLRRVMPCYSKTQKLSKIETLRLARNYIWAL). At Ser-89 the chain carries Phosphoserine.

In terms of assembly, efficient DNA binding requires dimerization with another bHLH protein. Forms a heterodimer with the bHLH protein hes2, and weakly interacts with hey1/hrt1. Post-translationally, serine or threonine phosphorylation within the basic region may regulate neurogenic activity. First expressed weakly at stage 12 in primary neuronal precursors. At stages 18 and 21, strongly expressed in the cranial ganglions, with weaker expression remaining in the spinal cord. Later, strongly expressed at sites of neuronal differentiation, namely the eye, forebrain and cranial ganglions.

Its subcellular location is the nucleus. Its function is as follows. Probably acts as a transcriptional activator. Mediates neuronal differentiation. Required for the regulation of amacrine cell fate specification in the retina. The protein is Neurogenic differentiation factor 4 (neurod4) of Xenopus laevis (African clawed frog).